The following is a 332-amino-acid chain: 6-phosphogluconolactonase (332 aa).

The protein belongs to the cycloisomerase 2 family.

It catalyses the reaction 6-phospho-D-glucono-1,5-lactone + H2O = 6-phospho-D-gluconate + H(+). The protein operates within carbohydrate degradation; pentose phosphate pathway; D-ribulose 5-phosphate from D-glucose 6-phosphate (oxidative stage): step 2/3. In terms of biological role, catalyzes the hydrolysis of 6-phosphogluconolactone to 6-phosphogluconate. This Pectobacterium atrosepticum (strain SCRI 1043 / ATCC BAA-672) (Erwinia carotovora subsp. atroseptica) protein is 6-phosphogluconolactonase.